Here is a 255-residue protein sequence, read N- to C-terminus: tRNA (guanine-N(7)-)-methyltransferase (255 aa).

The interval 1-29 is disordered; sequence MMHDDPNEAGLPPDDAALPDEAADGADEV. Over residues 17–27 the composition is skewed to acidic residues; that stretch reads ALPDEAADGAD. Positions 86, 111, 138, and 161 each coordinate S-adenosyl-L-methionine. The active site involves Asp-161. Substrate contacts are provided by residues Lys-165, Asp-197, and 232–235; that span reads TKFE.

The protein belongs to the class I-like SAM-binding methyltransferase superfamily. TrmB family.

The catalysed reaction is guanosine(46) in tRNA + S-adenosyl-L-methionine = N(7)-methylguanosine(46) in tRNA + S-adenosyl-L-homocysteine. Its pathway is tRNA modification; N(7)-methylguanine-tRNA biosynthesis. In terms of biological role, catalyzes the formation of N(7)-methylguanine at position 46 (m7G46) in tRNA. This is tRNA (guanine-N(7)-)-methyltransferase from Burkholderia ambifaria (strain ATCC BAA-244 / DSM 16087 / CCUG 44356 / LMG 19182 / AMMD) (Burkholderia cepacia (strain AMMD)).